We begin with the raw amino-acid sequence, 127 residues long: MSTSQRALGAYRHGLRAARIAFQGDTTMLNAARLKMRQGMEKPNPELSKDQQISLMEDVALFLRRNLVQGKKIKESTTTSDGKDVYRLNIHKDTELGDNDTVKNAKTTLKANGGVGCCGGSGAASKS.

A mitochondrion-targeting transit peptide spans 1 to 15; sequence MSTSQRALGAYRHGL.

It belongs to the complex I LYR family. MZM1 subfamily. As to quaternary structure, interacts with RIP1.

The protein resides in the mitochondrion matrix. Assembly factor required for Rieske Fe-S protein RIP1 incorporation into the cytochrome b-c1 (CIII) complex. Functions as a chaperone, binding to this subunit within the mitochondrial matrix and stabilizing it prior to its translocation and insertion into the late CIII dimeric intermediate within the mitochondrial inner membrane. Modulates the mitochondrial matrix zinc pool. The sequence is that of Mitochondrial zinc maintenance protein 1, mitochondrial (MZM1) from Vanderwaltozyma polyspora (strain ATCC 22028 / DSM 70294 / BCRC 21397 / CBS 2163 / NBRC 10782 / NRRL Y-8283 / UCD 57-17) (Kluyveromyces polysporus).